Here is a 296-residue protein sequence, read N- to C-terminus: uncharacterized protein (296 aa).

A signal peptide spans 1 to 20; the sequence is MKKALGILAILLILVGGYFA.

This is an uncharacterized protein from Aquifex aeolicus (strain VF5).